Here is an 83-residue protein sequence, read N- to C-terminus: Bowman-Birk type seed trypsin and chymotrypsin inhibitor (83 aa).

Intrachain disulfides connect cysteine 18–cysteine 72, cysteine 19–cysteine 34, cysteine 22–cysteine 68, cysteine 24–cysteine 32, cysteine 42–cysteine 49, cysteine 46–cysteine 61, and cysteine 51–cysteine 59.

The protein belongs to the Bowman-Birk serine protease inhibitor family.

The protein is Bowman-Birk type seed trypsin and chymotrypsin inhibitor of Vigna unguiculata (Cowpea).